Reading from the N-terminus, the 309-residue chain is Coproporphyrin III ferrochelatase (309 aa).

Fe-coproporphyrin III is bound by residues Tyr12, Thr14, Arg29, 45 to 46 (RY), Ser53, and Tyr124. 2 residues coordinate Fe(2+): His182 and Glu263.

This sequence belongs to the ferrochelatase family. As to quaternary structure, monomer.

It is found in the cytoplasm. The enzyme catalyses Fe-coproporphyrin III + 2 H(+) = coproporphyrin III + Fe(2+). The protein operates within porphyrin-containing compound metabolism; protoheme biosynthesis. Its function is as follows. Involved in coproporphyrin-dependent heme b biosynthesis. Catalyzes the insertion of ferrous iron into coproporphyrin III to form Fe-coproporphyrin III. In Listeria monocytogenes serovar 1/2a (strain ATCC BAA-679 / EGD-e), this protein is Coproporphyrin III ferrochelatase.